The following is a 364-amino-acid chain: tRNA 2-selenouridine synthase (364 aa).

The region spanning 12–135 (FLNDRPMMDT…MRTFLLDTTE (124 aa)) is the Rhodanese domain. C95 acts as the S-selanylcysteine intermediate in catalysis.

It belongs to the SelU family. As to quaternary structure, monomer.

The catalysed reaction is 5-methylaminomethyl-2-thiouridine(34) in tRNA + selenophosphate + (2E)-geranyl diphosphate + H2O + H(+) = 5-methylaminomethyl-2-selenouridine(34) in tRNA + (2E)-thiogeraniol + phosphate + diphosphate. The enzyme catalyses 5-methylaminomethyl-2-thiouridine(34) in tRNA + (2E)-geranyl diphosphate = 5-methylaminomethyl-S-(2E)-geranyl-thiouridine(34) in tRNA + diphosphate. It carries out the reaction 5-methylaminomethyl-S-(2E)-geranyl-thiouridine(34) in tRNA + selenophosphate + H(+) = 5-methylaminomethyl-2-(Se-phospho)selenouridine(34) in tRNA + (2E)-thiogeraniol. It catalyses the reaction 5-methylaminomethyl-2-(Se-phospho)selenouridine(34) in tRNA + H2O = 5-methylaminomethyl-2-selenouridine(34) in tRNA + phosphate. Its function is as follows. Involved in the post-transcriptional modification of the uridine at the wobble position (U34) of tRNA(Lys), tRNA(Glu) and tRNA(Gln). Catalyzes the conversion of 2-thiouridine (S2U-RNA) to 2-selenouridine (Se2U-RNA). Acts in a two-step process involving geranylation of 2-thiouridine (S2U) to S-geranyl-2-thiouridine (geS2U) and subsequent selenation of the latter derivative to 2-selenouridine (Se2U) in the tRNA chain. The protein is tRNA 2-selenouridine synthase of Pseudomonas fluorescens (strain ATCC BAA-477 / NRRL B-23932 / Pf-5).